The sequence spans 537 residues: ATP synthase subunit alpha (537 aa).

Residue 171 to 178 (GDRQTGKT) coordinates ATP.

This sequence belongs to the ATPase alpha/beta chains family. In terms of assembly, F-type ATPases have 2 components, CF(1) - the catalytic core - and CF(0) - the membrane proton channel. CF(1) has five subunits: alpha(3), beta(3), gamma(1), delta(1), epsilon(1). CF(0) has four main subunits: a, b, b' and c.

The protein localises to the cell inner membrane. The enzyme catalyses ATP + H2O + 4 H(+)(in) = ADP + phosphate + 5 H(+)(out). Produces ATP from ADP in the presence of a proton gradient across the membrane. The alpha chain is a regulatory subunit. The polypeptide is ATP synthase subunit alpha (Chloroherpeton thalassium (strain ATCC 35110 / GB-78)).